Consider the following 205-residue polypeptide: LexA repressor (205 aa).

Positions 28–48 (RAEIAHKLGFRSANSAEEHLK) form a DNA-binding region, H-T-H motif. Active-site for autocatalytic cleavage activity residues include Ser122 and Lys159.

It belongs to the peptidase S24 family. As to quaternary structure, homodimer.

The catalysed reaction is Hydrolysis of Ala-|-Gly bond in repressor LexA.. In terms of biological role, represses a number of genes involved in the response to DNA damage (SOS response), including recA and lexA. In the presence of single-stranded DNA, RecA interacts with LexA causing an autocatalytic cleavage which disrupts the DNA-binding part of LexA, leading to derepression of the SOS regulon and eventually DNA repair. This Idiomarina loihiensis (strain ATCC BAA-735 / DSM 15497 / L2-TR) protein is LexA repressor.